Here is a 171-residue protein sequence, read N- to C-terminus: MSDEILNGAAAPADAAAAGPAFTIEKIYVKDVSFESPNAPAVFNDANQPELQLNLNQKVQRLNDNAFEVVLAVTLTCTAGGKTAYVAEVQQAGVFGLVGLDPQAIDVLLGTQCPNILFPYVRTLVSDLIQAGGFPPFYLQPINFEALYAESVRQRHNESASLADSEPAGNA.

This sequence belongs to the SecB family. As to quaternary structure, homotetramer, a dimer of dimers. One homotetramer interacts with 1 SecA dimer.

It localises to the cytoplasm. One of the proteins required for the normal export of preproteins out of the cell cytoplasm. It is a molecular chaperone that binds to a subset of precursor proteins, maintaining them in a translocation-competent state. It also specifically binds to its receptor SecA. This chain is Protein-export protein SecB, found in Xanthomonas oryzae pv. oryzae (strain MAFF 311018).